The chain runs to 160 residues: MSLATLDTTQHPNLPASSATLFSAKATKALSFEQIAQHIGRNEVATAAIFYGQAKASPEDIEKLSSLLDIDHETLKAQLSGFPDRGRSVEMPPKEPLIYRLYEIVQNYGYAYKAVLNEKFGDGIMSAISFSTKVEKETDEQGNNWAVITLRGKWLPFSRF.

Residues Arg-100, Glu-103, and Ser-126 contribute to the active site.

This sequence belongs to the cyanase family.

The catalysed reaction is cyanate + hydrogencarbonate + 3 H(+) = NH4(+) + 2 CO2. Catalyzes the reaction of cyanate with bicarbonate to produce ammonia and carbon dioxide. This Emericella nidulans (strain FGSC A4 / ATCC 38163 / CBS 112.46 / NRRL 194 / M139) (Aspergillus nidulans) protein is Cyanate hydratase.